A 552-amino-acid polypeptide reads, in one-letter code: Cytochrome P450 97B1, chloroplastic (552 aa).

The N-terminal 52 residues, 1-52, are a transit peptide targeting the chloroplast; it reads MVAAPISTVKLTDANLHTRFHSSSSSTPSTLSLPLSLHFHFSSHSKRFSSIR. C528 is a heme binding site.

This sequence belongs to the cytochrome P450 family. Heme serves as cofactor.

The protein resides in the plastid. The protein localises to the chloroplast membrane. The sequence is that of Cytochrome P450 97B1, chloroplastic (CYP97B1) from Pisum sativum (Garden pea).